We begin with the raw amino-acid sequence, 689 residues long: Glycine--tRNA ligase beta subunit (689 aa).

The protein belongs to the class-II aminoacyl-tRNA synthetase family. Tetramer of two alpha and two beta subunits.

It localises to the cytoplasm. It carries out the reaction tRNA(Gly) + glycine + ATP = glycyl-tRNA(Gly) + AMP + diphosphate. This is Glycine--tRNA ligase beta subunit from Dictyoglomus thermophilum (strain ATCC 35947 / DSM 3960 / H-6-12).